Consider the following 624-residue polypeptide: DNA mismatch repair protein MutL (624 aa).

This sequence belongs to the DNA mismatch repair MutL/HexB family.

Its function is as follows. This protein is involved in the repair of mismatches in DNA. It is required for dam-dependent methyl-directed DNA mismatch repair. May act as a 'molecular matchmaker', a protein that promotes the formation of a stable complex between two or more DNA-binding proteins in an ATP-dependent manner without itself being part of a final effector complex. This chain is DNA mismatch repair protein MutL, found in Xanthomonas campestris pv. campestris (strain B100).